The sequence spans 358 residues: F-box/kelch-repeat protein SKIP4 (358 aa).

In terms of domain architecture, F-box spans 20–67; that stretch reads ALISGVPDDISKSCLARVPREYHMAMKCVSRRWRDFVCSDEMCDYRNE. Kelch repeat units lie at residues 78–122, 123–171, 173–219, 220–269, 271–307, and 308–355; these read LCRD…VLGK, RLFV…TLDG, IIAI…VMDG, RIYI…VLDQ, FGAK…SIGN, and SIFV…SCKS.

In terms of assembly, part of a SCF (SKP1-cullin-F-box) protein ligase complex. Interacts with SKP1A/ASK1.

It functions in the pathway protein modification; protein ubiquitination. In Arabidopsis thaliana (Mouse-ear cress), this protein is F-box/kelch-repeat protein SKIP4 (SKIP4).